A 1025-amino-acid polypeptide reads, in one-letter code: Glycine dehydrogenase (decarboxylating), mitochondrial (1025 aa).

Residues 1–35 (MQLCARAWGLRLGRGAGGGHRLARGTGLSWAQRSR) constitute a mitochondrion transit peptide. Residues 16–51 (AGGGHRLARGTGLSWAQRSRDSSGGGGGGGGGDRGA) are disordered. Residues 38–50 (SGGGGGGGGGDRG) show a composition bias toward gly residues. K452, K519, K653, and K669 each carry N6-acetyllysine. Position 759 is an N6-(pyridoxal phosphate)lysine (K759).

This sequence belongs to the GcvP family. In terms of assembly, interacts with GCSH. Homodimer. The glycine cleavage system is composed of four proteins: P (GLDC), T (GCST), L (DLD) and H (GCSH). Pyridoxal 5'-phosphate is required as a cofactor.

The protein localises to the mitochondrion. The catalysed reaction is N(6)-[(R)-lipoyl]-L-lysyl-[glycine-cleavage complex H protein] + glycine + H(+) = N(6)-[(R)-S(8)-aminomethyldihydrolipoyl]-L-lysyl-[glycine-cleavage complex H protein] + CO2. Stimulated by lipoic acid. Inhibited in presence of methylamine. Its function is as follows. The glycine cleavage system catalyzes the degradation of glycine. The P protein (GLDC) binds the alpha-amino group of glycine through its pyridoxal phosphate cofactor; CO(2) is released and the remaining methylamine moiety is then transferred to the lipoamide cofactor of the H protein (GCSH). In Mus musculus (Mouse), this protein is Glycine dehydrogenase (decarboxylating), mitochondrial.